The primary structure comprises 247 residues: Methionyl-tRNA formyltransferase (247 aa).

Belongs to the Fmt family.

It catalyses the reaction L-methionyl-tRNA(fMet) + (6R)-10-formyltetrahydrofolate = N-formyl-L-methionyl-tRNA(fMet) + (6S)-5,6,7,8-tetrahydrofolate + H(+). Its function is as follows. Attaches a formyl group to the free amino group of methionyl-tRNA(fMet). The formyl group appears to play a dual role in the initiator identity of N-formylmethionyl-tRNA by promoting its recognition by IF2 and preventing the misappropriation of this tRNA by the elongation apparatus. The polypeptide is Methionyl-tRNA formyltransferase (fmt) (Vibrio alginolyticus).